The chain runs to 121 residues: MGIKYSNKINKIRTFALSLVFLGILVMYIGIFFRTHEVIMVLAMILGFLCIIASTAVYFWIGMISTRAIPVVCPECGKPTKVLGRVDACMHCDQPLTLDRSLEGKEFDEKYNLKGKKRVDG.

2 helical membrane-spanning segments follow: residues 12–32 (IRTF…IGIF) and 41–61 (VLAM…YFWI).

This sequence belongs to the UPF0295 family.

It localises to the cell membrane. This Halalkalibacterium halodurans (strain ATCC BAA-125 / DSM 18197 / FERM 7344 / JCM 9153 / C-125) (Bacillus halodurans) protein is UPF0295 protein BH0952.